The chain runs to 420 residues: Pyridinium-3,5-bisthiocarboxylic acid mononucleotide nickel insertion protein (420 aa).

The protein belongs to the LarC family.

The enzyme catalyses Ni(II)-pyridinium-3,5-bisthiocarboxylate mononucleotide = pyridinium-3,5-bisthiocarboxylate mononucleotide + Ni(2+). Functionally, involved in the biosynthesis of a nickel-pincer cofactor ((SCS)Ni(II) pincer complex). Binds Ni(2+), and functions in nickel delivery to pyridinium-3,5-bisthiocarboxylic acid mononucleotide (P2TMN), to form the mature cofactor. Is required for the activation of the lactate racemase LarA. May also be involved in the activation of other nickel-pincer cofactor-dependent enzymes. This chain is Pyridinium-3,5-bisthiocarboxylic acid mononucleotide nickel insertion protein, found in Lactiplantibacillus plantarum (strain ATCC BAA-793 / NCIMB 8826 / WCFS1) (Lactobacillus plantarum).